Here is a 488-residue protein sequence, read N- to C-terminus: 3-octaprenyl-4-hydroxybenzoate carboxy-lyase (488 aa).

N172 contacts Mn(2+). Prenylated FMN-binding positions include I175–R177, R189–L191, and R194–G195. E238 contributes to the Mn(2+) binding site. The active-site Proton donor is D287.

It belongs to the UbiD family. In terms of assembly, homohexamer. It depends on prenylated FMN as a cofactor. The cofactor is Mn(2+).

The protein localises to the cell membrane. The enzyme catalyses a 4-hydroxy-3-(all-trans-polyprenyl)benzoate + H(+) = a 2-(all-trans-polyprenyl)phenol + CO2. It participates in cofactor biosynthesis; ubiquinone biosynthesis. Functionally, catalyzes the decarboxylation of 3-octaprenyl-4-hydroxy benzoate to 2-octaprenylphenol, an intermediate step in ubiquinone biosynthesis. In Pseudomonas syringae pv. syringae (strain B728a), this protein is 3-octaprenyl-4-hydroxybenzoate carboxy-lyase.